Consider the following 244-residue polypeptide: Lysine N-acyltransferase MbtK (244 aa).

Position 146 (His146) interacts with substrate. Asp184 serves as the catalytic Proton acceptor. The interval 224 to 244 is disordered; it reads ADAPPTGDLQSSPVGESISSS. The span at 231–244 shows a compositional bias: polar residues; it reads DLQSSPVGESISSS.

Belongs to the lysine N-acyltransferase MbtK family. As to quaternary structure, monomer.

Its pathway is siderophore biosynthesis; mycobactin biosynthesis. Its function is as follows. Acyltransferase required for the direct transfer of medium- to long-chain fatty acyl moieties from a carrier protein (MbtL) on to the epsilon-amino group of lysine residue in the mycobactin core. This is Lysine N-acyltransferase MbtK (mbtK) from Mycobacterium sp. (strain MCS).